The sequence spans 67 residues: Large ribosomal subunit protein bL32 (67 aa).

Positions 1-19 (MAVPKRKMSRANTRARRAQ) are enriched in basic residues. The interval 1-20 (MAVPKRKMSRANTRARRAQW) is disordered.

The protein belongs to the bacterial ribosomal protein bL32 family.

This chain is Large ribosomal subunit protein bL32, found in Paenarthrobacter aurescens (strain TC1).